We begin with the raw amino-acid sequence, 466 residues long: Argininosuccinate lyase (466 aa).

The protein belongs to the lyase 1 family. Argininosuccinate lyase subfamily.

The protein resides in the cytoplasm. The catalysed reaction is 2-(N(omega)-L-arginino)succinate = fumarate + L-arginine. Its pathway is amino-acid biosynthesis; L-arginine biosynthesis; L-arginine from L-ornithine and carbamoyl phosphate: step 3/3. In Brucella canis (strain ATCC 23365 / NCTC 10854 / RM-666), this protein is Argininosuccinate lyase.